A 192-amino-acid chain; its full sequence is NADH-ubiquinone oxidoreductase subunit 9 (192 aa).

The protein belongs to the complex I 30 kDa subunit family. Complex I is composed of about 30 different subunits.

Its subcellular location is the mitochondrion inner membrane. The enzyme catalyses a ubiquinone + NADH + 5 H(+)(in) = a ubiquinol + NAD(+) + 4 H(+)(out). Core subunit of the mitochondrial membrane respiratory chain NADH dehydrogenase (Complex I) that is believed to belong to the minimal assembly required for catalysis. Complex I functions in the transfer of electrons from NADH to the respiratory chain. The immediate electron acceptor for the enzyme is believed to be ubiquinone. This Prototheca wickerhamii protein is NADH-ubiquinone oxidoreductase subunit 9 (NAD9).